A 238-amino-acid polypeptide reads, in one-letter code: Uridylate kinase (238 aa).

An ATP-binding site is contributed by 12–15 (KLSG). Gly54 contributes to the UMP binding site. Residues Gly55 and Arg59 each contribute to the ATP site. UMP contacts are provided by residues Asp74 and 135-142 (TGNPFFTT). Positions 162, 168, and 171 each coordinate ATP.

The protein belongs to the UMP kinase family. In terms of assembly, homohexamer.

Its subcellular location is the cytoplasm. The enzyme catalyses UMP + ATP = UDP + ADP. It participates in pyrimidine metabolism; CTP biosynthesis via de novo pathway; UDP from UMP (UMPK route): step 1/1. Its activity is regulated as follows. Inhibited by UTP. In terms of biological role, catalyzes the reversible phosphorylation of UMP to UDP. The sequence is that of Uridylate kinase from Nitrosospira multiformis (strain ATCC 25196 / NCIMB 11849 / C 71).